Consider the following 181-residue polypeptide: c-Myc-binding protein homolog (181 aa).

Low complexity predominate over residues 111 to 127; the sequence is ESTEAAEQQQQQQQQEN. Disordered stretches follow at residues 111-145 and 159-181; these read ESTEAAEQQQQQQQQENGETELEKPNESSADVAEI and VVTTDEAAQPSPTVQAEASGSSE. Polar residues predominate over residues 168-181; the sequence is PSPTVQAEASGSSE.

Belongs to the AMY1 family.

Its subcellular location is the nucleus. This is c-Myc-binding protein homolog from Drosophila melanogaster (Fruit fly).